The sequence spans 225 residues: Ribonuclease 3 (225 aa).

In terms of domain architecture, RNase III spans 4–127 (IEKLEQSLTY…IIGAIHLEAG (124 aa)). A Mg(2+)-binding site is contributed by Glu40. The active site involves Asp44. Mg(2+) contacts are provided by Asp113 and Glu116. Glu116 is a catalytic residue. A DRBM domain is found at 154-223 (DYKTKLQEIT…AKIALEKLGS (70 aa)).

It belongs to the ribonuclease III family. As to quaternary structure, homodimer. Requires Mg(2+) as cofactor.

The protein localises to the cytoplasm. It carries out the reaction Endonucleolytic cleavage to 5'-phosphomonoester.. In terms of biological role, digests double-stranded RNA. Involved in the processing of primary rRNA transcript to yield the immediate precursors to the large and small rRNAs (23S and 16S). Processes some mRNAs, and tRNAs when they are encoded in the rRNA operon. Processes pre-crRNA and tracrRNA of type II CRISPR loci if present in the organism. In Campylobacter jejuni subsp. doylei (strain ATCC BAA-1458 / RM4099 / 269.97), this protein is Ribonuclease 3.